The following is a 136-amino-acid chain: Large ribosomal subunit protein uL16 (136 aa).

This sequence belongs to the universal ribosomal protein uL16 family. In terms of assembly, part of the 50S ribosomal subunit.

Binds 23S rRNA and is also seen to make contacts with the A and possibly P site tRNAs. The sequence is that of Large ribosomal subunit protein uL16 from Vesicomyosocius okutanii subsp. Calyptogena okutanii (strain HA).